Consider the following 271-residue polypeptide: MFSIQQPLLVFSDLDGTLLDSHSYDWQPAAPWLSRLHEANIPVILCSSKTSAEMLYLQKMLGLQGLPLIAENGAVIQLAEQWQDIDGFPRIISGISHGEICQVLNTLREKEHFKFTTFDDVDDATIAEWTGLSRSQAALTQLHEASVTLIWRDSDEHMAQFIARLNELGLQFMQGARFWHVLDASAGKDQAANWIIATYQQLSGRRPTTLGLGDGPNDAPLLEVMDYAVIVKGLNREGVHLHDEDPARVWRTQREGPEGWREGLDHFFPAR.

D13 functions as the Nucleophile in the catalytic mechanism. Mg(2+) contacts are provided by D13, D15, and D214.

It belongs to the HAD-like hydrolase superfamily. MPGP family. It depends on Mg(2+) as a cofactor.

Its subcellular location is the cytoplasm. It carries out the reaction 2-O-(alpha-D-mannosyl)-3-phosphoglycerate + H2O = (2R)-2-O-(alpha-D-mannosyl)-glycerate + phosphate. In Escherichia coli O7:K1 (strain IAI39 / ExPEC), this protein is Mannosyl-3-phosphoglycerate phosphatase.